We begin with the raw amino-acid sequence, 237 residues long: Protein ULTRAPETALA 1 (237 aa).

An SAND domain is found at 18–116 (EELQEMSGVN…SKTVLLKYYN (99 aa)). The CW-type zinc finger occupies 133-191 (VCHRDEFVGCNDCGKERRFRLRSRDECRLHHNAMGDPNWKCSDFPYDKITCEEEEERGS).

Interacts with HHO5. Associates with ATX1 for trimethylating 'Lys-4' on histone H3 (H3K4me3) at flower MADS box gene loci. Expressed at low levels in seedlings, roots, shoots, leaves, stems, inflorescences, pollen, flowers and siliques, with highest levels dividing tissues including inflorescence.

The protein localises to the cytoplasm. Its subcellular location is the nucleus. Its function is as follows. Putative transcription factor that acts as a key negative regulator of cell accumulation in shoot and floral meristems. Negatively regulates the size of the WUSCHEL (WUS)-expressing organizing center in inflorescence meristems. May act by down-regulating expression of WUS. Acts as an antirepressor that counteracts EMF1 action through modulation of trimethylated 'Lys-4' on histone H3 (H3K4me3) marks on target gene loci (including genes involved in salt stress response and flower development). Collaboratively with RBL and CYP40/SQN, influences floral meristem (FM) determinacy in an AGAMOUS and SUPERMAN-dependent manner, thus contributing to the floral developmental homeostasis. This is Protein ULTRAPETALA 1 from Arabidopsis thaliana (Mouse-ear cress).